The sequence spans 381 residues: MNALDGVPFKLPKGFVIGTEPLPGPELSVPACGEVLLGSMHDFSLERTALFWVEAAGQGPSPYQCGDPGTASAPPAWLLLVSPEHGLAPAPTTIRDPEAGHQERPEEEGEDEAEASSGSEEEPAPSSLQPGSPASPGPGRRLCSLDVLRGVRLELAGARRRLSEGKLVSRPRALLHGLRGHRALSLCPSPAQSPRSASPPGPAPQHPAAPASPPRPSTAGAIPPLRSHKPTVASLSPYTCLPPLGGAPQPLNPHKSHPDTAADLLSALSQEEQDLIGPVVALGYPLRRAIIALQKTGRQSLSQFLSYLSACDRLLRQGYEEGLVDEAMEMFQFSESQAGEFLRLWEQFSDMGFQQDRIKEVLLVHGNRREQALEELVACAQ.

A UMA domain is found at 4 to 50 (LDGVPFKLPKGFVIGTEPLPGPELSVPACGEVLLGSMHDFSLERTAL). Disordered stretches follow at residues 87 to 141 (LAPA…PGRR) and 185 to 228 (SLCP…LRSH). Residues 95–104 (RDPEAGHQER) are compositionally biased toward basic and acidic residues. Positions 105 to 123 (PEEEGEDEAEASSGSEEEP) are enriched in acidic residues. The segment covering 124-141 (APSSLQPGSPASPGPGRR) has biased composition (low complexity). Pro residues predominate over residues 197–216 (ASPPGPAPQHPAAPASPPRP).

The sequence is that of Ubiquitin-associated protein 1-like (UBAP1L) from Homo sapiens (Human).